Consider the following 871-residue polypeptide: Valine--tRNA ligase (871 aa).

The short motif at 47-57 is the 'HIGH' region element; it reads PNVTGRLHIGH. The short motif at 534–538 is the 'KMSKS' region element; that stretch reads KMSKS. K537 serves as a coordination point for ATP. Residues 805–871 adopt a coiled-coil conformation; it reads DLTPILNRLN…IEEELARLTR (67 aa).

The protein belongs to the class-I aminoacyl-tRNA synthetase family. ValS type 1 subfamily. As to quaternary structure, monomer.

It localises to the cytoplasm. The catalysed reaction is tRNA(Val) + L-valine + ATP = L-valyl-tRNA(Val) + AMP + diphosphate. In terms of biological role, catalyzes the attachment of valine to tRNA(Val). As ValRS can inadvertently accommodate and process structurally similar amino acids such as threonine, to avoid such errors, it has a 'posttransfer' editing activity that hydrolyzes mischarged Thr-tRNA(Val) in a tRNA-dependent manner. This Nitratiruptor sp. (strain SB155-2) protein is Valine--tRNA ligase.